A 285-amino-acid polypeptide reads, in one-letter code: Phosphatidate cytidylyltransferase (285 aa).

8 helical membrane passes run 10–30 (FVLIPVVIAALFLLPPVGFAI), 56–76 (VWLAVLCGLLLALMLFLLPEY), 93–113 (LGWWIVALLLVLFYPGSAAIW), 121–141 (LIFGVLTIVPFFWGMLALRAW), 151–171 (AIWLLYVMILVWGADSGAYMF), 190–210 (WQGFIGGLATAAVISWGYGMW), 213–233 (LDVAPVTLLICSIVAALASVL), and 264–284 (IDSLTAAVPVFACLLLLVFRT).

The protein belongs to the CDS family.

It localises to the cell inner membrane. The enzyme catalyses a 1,2-diacyl-sn-glycero-3-phosphate + CTP + H(+) = a CDP-1,2-diacyl-sn-glycerol + diphosphate. It functions in the pathway phospholipid metabolism; CDP-diacylglycerol biosynthesis; CDP-diacylglycerol from sn-glycerol 3-phosphate: step 3/3. The protein is Phosphatidate cytidylyltransferase (cdsA) of Escherichia coli O157:H7.